A 485-amino-acid polypeptide reads, in one-letter code: N-succinylglutamate 5-semialdehyde dehydrogenase (485 aa).

220–225 (GSANTG) provides a ligand contact to NAD(+). Residues Glu-243 and Cys-278 contribute to the active site.

This sequence belongs to the aldehyde dehydrogenase family. AstD subfamily.

The catalysed reaction is N-succinyl-L-glutamate 5-semialdehyde + NAD(+) + H2O = N-succinyl-L-glutamate + NADH + 2 H(+). It participates in amino-acid degradation; L-arginine degradation via AST pathway; L-glutamate and succinate from L-arginine: step 4/5. Its function is as follows. Catalyzes the NAD-dependent reduction of succinylglutamate semialdehyde into succinylglutamate. This is N-succinylglutamate 5-semialdehyde dehydrogenase from Vibrio vulnificus (strain YJ016).